The primary structure comprises 56 residues: MNDQKNISINEAIKQFPQEFNNRIGFELNRINTNLRFSHFEEQRGNMFFLMSNLNV.

This is an uncharacterized protein from Dictyostelium discoideum (Social amoeba).